The chain runs to 137 residues: NADPH-dependent 7-cyano-7-deazaguanine reductase (137 aa).

Residue C50 is the Thioimide intermediate of the active site. Residue D57 is the Proton donor of the active site. Substrate contacts are provided by residues 72 to 74 (VEL) and 91 to 92 (HE).

Belongs to the GTP cyclohydrolase I family. QueF type 1 subfamily.

The protein resides in the cytoplasm. It catalyses the reaction 7-aminomethyl-7-carbaguanine + 2 NADP(+) = 7-cyano-7-deazaguanine + 2 NADPH + 3 H(+). It participates in tRNA modification; tRNA-queuosine biosynthesis. Catalyzes the NADPH-dependent reduction of 7-cyano-7-deazaguanine (preQ0) to 7-aminomethyl-7-deazaguanine (preQ1). The sequence is that of NADPH-dependent 7-cyano-7-deazaguanine reductase from Synechococcus sp. (strain CC9902).